The sequence spans 572 residues: DNA mismatch repair protein MutL (572 aa).

The protein belongs to the DNA mismatch repair MutL/HexB family.

In terms of biological role, this protein is involved in the repair of mismatches in DNA. It is required for dam-dependent methyl-directed DNA mismatch repair. May act as a 'molecular matchmaker', a protein that promotes the formation of a stable complex between two or more DNA-binding proteins in an ATP-dependent manner without itself being part of a final effector complex. This is DNA mismatch repair protein MutL from Dictyoglomus turgidum (strain DSM 6724 / Z-1310).